The sequence spans 318 residues: Acetyl-coenzyme A carboxylase carboxyl transferase subunit alpha (318 aa).

The CoA carboxyltransferase C-terminal domain occupies 43-293 (RSQTALRDLY…GDGIAAALKS (251 aa)).

The protein belongs to the AccA family. In terms of assembly, acetyl-CoA carboxylase is a heterohexamer composed of biotin carboxyl carrier protein (AccB), biotin carboxylase (AccC) and two subunits each of ACCase subunit alpha (AccA) and ACCase subunit beta (AccD).

The protein resides in the cytoplasm. It catalyses the reaction N(6)-carboxybiotinyl-L-lysyl-[protein] + acetyl-CoA = N(6)-biotinyl-L-lysyl-[protein] + malonyl-CoA. It participates in lipid metabolism; malonyl-CoA biosynthesis; malonyl-CoA from acetyl-CoA: step 1/1. Component of the acetyl coenzyme A carboxylase (ACC) complex. First, biotin carboxylase catalyzes the carboxylation of biotin on its carrier protein (BCCP) and then the CO(2) group is transferred by the carboxyltransferase to acetyl-CoA to form malonyl-CoA. The protein is Acetyl-coenzyme A carboxylase carboxyl transferase subunit alpha of Bartonella bacilliformis (strain ATCC 35685 / KC583 / Herrer 020/F12,63).